A 499-amino-acid chain; its full sequence is Heparin cofactor 2 (499 aa).

Residues 1 to 19 (MKHSLNALLIFLIITSAWG) form the signal peptide. A Phosphoserine; by FAM20C modification is found at S37. The N-linked (GlcNAc...) (complex) asparagine glycan is linked to N49. Residues 68 to 79 (DWIPEGEEDDDY) are chemotactic activity. Repeat copies occupy residues 73-83 (GEEDDDYLDLE) and 87-97 (SEDDDYIDIVD). The tract at residues 73 to 97 (GEEDDDYLDLEKIFSEDDDYIDIVD) is 2 X 11 AA approximate repeats, Asp/Glu-rich (acidic) (hirudin-like). Sulfotyrosine occurs at positions 79 and 92. N-linked (GlcNAc...) asparagine glycosylation occurs at N188. The tract at residues 192–212 (KYEITTIHNLFRKLTHRLFRR) is glycosaminoglycan-binding site. N-linked (GlcNAc...) asparagine glycosylation occurs at N387.

Belongs to the serpin family. Post-translationally, phosphorylated by FAM20C in the extracellular medium. Expressed predominantly in liver. Also present in plasma. As to expression, expressed in plasma (at protein level). Expressed in liver.

In terms of biological role, thrombin inhibitor activated by the glycosaminoglycans, heparin or dermatan sulfate. In the presence of the latter, HC-II becomes the predominant thrombin inhibitor in place of antithrombin III (AT-III). Also inhibits chymotrypsin, but in a glycosaminoglycan-independent manner. Peptides at the N-terminal of HC-II have chemotactic activity for both monocytes and neutrophils. Functionally, shows negligible inhibition, in vitro, of thrombin and tPA and no inhibition of factor Xa, in vitro. The protein is Heparin cofactor 2 (SERPIND1) of Homo sapiens (Human).